A 144-amino-acid chain; its full sequence is Ribosome-binding factor A (144 aa).

Residues 120–144 form a disordered region; that stretch reads DKRRMAESGREEDDAAPDETTEDNA. The span at 129 to 144 shows a compositional bias: acidic residues; the sequence is REEDDAAPDETTEDNA.

It belongs to the RbfA family. In terms of assembly, monomer. Binds 30S ribosomal subunits, but not 50S ribosomal subunits or 70S ribosomes.

Its subcellular location is the cytoplasm. Its function is as follows. One of several proteins that assist in the late maturation steps of the functional core of the 30S ribosomal subunit. Associates with free 30S ribosomal subunits (but not with 30S subunits that are part of 70S ribosomes or polysomes). Required for efficient processing of 16S rRNA. May interact with the 5'-terminal helix region of 16S rRNA. The chain is Ribosome-binding factor A from Aeromonas hydrophila subsp. hydrophila (strain ATCC 7966 / DSM 30187 / BCRC 13018 / CCUG 14551 / JCM 1027 / KCTC 2358 / NCIMB 9240 / NCTC 8049).